The primary structure comprises 367 residues: Zinc transport system membrane protein TroD (367 aa).

The next 9 membrane-spanning stretches (helical) occupy residues 5-25, 28-48, 56-76, 87-107, 140-160, 170-190, 201-221, 224-244, and 251-271; these read VVLI…FLVL, ISLM…LGYF, FVPF…AELL, AVGL…SLYA, SLVQ…LFFK, VLAT…MLAV, VGAV…LLLT, LLLM…SGLF, and GSIA…VYLF.

The protein belongs to the ABC-3 integral membrane protein family.

The protein localises to the cell membrane. Its function is as follows. Part of an ATP-driven transport system TroABCD for zinc. This chain is Zinc transport system membrane protein TroD (troD), found in Treponema pallidum (strain Nichols).